The sequence spans 207 residues: Protein 6b (207 aa).

In terms of biological role, involved in tumor formation and increases auxin and cytokinin effects in host plants. This is Protein 6b (6b) from Agrobacterium vitis (Rhizobium vitis).